The following is a 162-amino-acid chain: Transcription elongation factor GreA (162 aa).

A coiled-coil region spans residues 50–75 (YHAAREEQGHLESRIRQLQELLRTAK).

It belongs to the GreA/GreB family.

Its function is as follows. Necessary for efficient RNA polymerase transcription elongation past template-encoded arresting sites. The arresting sites in DNA have the property of trapping a certain fraction of elongating RNA polymerases that pass through, resulting in locked ternary complexes. Cleavage of the nascent transcript by cleavage factors such as GreA or GreB allows the resumption of elongation from the new 3'terminus. GreA releases sequences of 2 to 3 nucleotides. The chain is Transcription elongation factor GreA from Saccharopolyspora erythraea (strain ATCC 11635 / DSM 40517 / JCM 4748 / NBRC 13426 / NCIMB 8594 / NRRL 2338).